Consider the following 227-residue polypeptide: Esterase OVCA2 (227 aa).

Active-site charge relay system residues include S119, D179, and H206.

It belongs to the LovG family.

The enzyme catalyses a carboxylic ester + H2O = an alcohol + a carboxylate + H(+). Exhibits ester hydrolase activity with a strong preference for long-chain alkyl ester substrates and high selectivity against a variety of short, branched, and substituted esters. Is able to hydrolyze ester bonds within a wide range of p-nitrophenyl derivatives (C2-C14) in vitro, with a strong preference toward substrates of &gt;8 carbons. This Bos taurus (Bovine) protein is Esterase OVCA2 (OVCA2).